Reading from the N-terminus, the 478-residue chain is POU domain, class 2, transcription factor 2 (478 aa).

Disordered regions lie at residues 1–82 (MVHS…PPQA), 167–199 (QAVTRPTLSDPHLSHPQPPKCLEPPSHPEEASD), 275–298 (SSLPSPNQLSRPSLGFDGLPGRRR), 357–391 (PCSAAPMLPSPGKPASYSPHLVTPQGGAGTLPLSQ), and 409–478 (TLHP…PYQP). Residues 12–37 (RMSKPLEAEKQGLDSPSEHTDTERNG) are compositionally biased toward basic and acidic residues. Polar residues predominate over residues 38–60 (PDTNHQNPQNKTSPFSVSPTGPS). The POU-specific domain maps to 195–269 (EEASDLEELE…LLEKWLNDAE (75 aa)). Residues 275-285 (SSLPSPNQLSR) are compositionally biased toward polar residues. The homeobox DNA-binding region spans 297–356 (RRKKRTSIETNVRFALEKSFLANQKPTSEEILLIAEQLHMEKEVIRVWFCNRRQKEKRIN). The leucine-zipper stretch occupies residues 389–410 (LSQASSSLSTTVTTLSSAVGTL). Gly residues predominate over residues 416-425 (AGGGAAGGGA).

It belongs to the POU transcription factor family. Class-2 subfamily. As to quaternary structure, interacts with NR3C1, AR and PGR. Interacts with POU2AF1; the interaction increases POU2F2 transactivation activity. As to expression, predominantly expressed in B-cells.

Its subcellular location is the nucleus. Its activity is regulated as follows. Transactivation activity is enhanced by transcriptional coactivator POU2AF1. Transcription factor that specifically binds to the octamer motif (5'-ATTTGCAT-3'). Regulates IL6 expression in B cells with POU2AF1. Regulates transcription in a number of tissues in addition to activating immunoglobulin gene expression. Modulates transcription transactivation by NR3C1, AR and PGR. This chain is POU domain, class 2, transcription factor 2 (POU2F2), found in Sus scrofa (Pig).